The following is a 497-amino-acid chain: Replication factor C large subunit (497 aa).

50-57 (GPAGVGKT) serves as a coordination point for ATP. The span at 428–455 (KRRSLGRDEGKAFFEKKPKKQTPDKKQM) shows a compositional bias: basic and acidic residues. Positions 428–497 (KRRSLGRDEG…AKPQKTLFDF (70 aa)) are disordered. Over residues 456–465 (DLTQIINSTP) the composition is skewed to polar residues. Positions 466–476 (QEDKVEKKETE) are enriched in basic and acidic residues.

This sequence belongs to the activator 1 small subunits family. RfcL subfamily. As to quaternary structure, heteromultimer composed of small subunits (RfcS) and large subunits (RfcL).

Its function is as follows. Part of the RFC clamp loader complex which loads the PCNA sliding clamp onto DNA. This Methanococcoides burtonii (strain DSM 6242 / NBRC 107633 / OCM 468 / ACE-M) protein is Replication factor C large subunit.